A 375-amino-acid chain; its full sequence is Trichodiene synthase (375 aa).

This sequence belongs to the trichodiene synthase family.

It catalyses the reaction (2E,6E)-farnesyl diphosphate = trichodiene + diphosphate. Its pathway is sesquiterpene biosynthesis; trichothecene biosynthesis. In terms of biological role, TS is a member of the terpene cyclase group of enzymes. It catalyzes the isomerization and cyclization of farnesyl pyro-phosphate to form trichodiene, the first cyclic intermediate in the biosynthetic pathway for trichothecenes. It serves to branch trichothecene biosynthesis from the isoprenoid pathway. This is Trichodiene synthase (TRI5) from Fusarium boothii.